The chain runs to 286 residues: Bifunctional protein FolD (286 aa).

Residues 166–168 (GAS) and Ile-232 contribute to the NADP(+) site.

The protein belongs to the tetrahydrofolate dehydrogenase/cyclohydrolase family. Homodimer.

The catalysed reaction is (6R)-5,10-methylene-5,6,7,8-tetrahydrofolate + NADP(+) = (6R)-5,10-methenyltetrahydrofolate + NADPH. It catalyses the reaction (6R)-5,10-methenyltetrahydrofolate + H2O = (6R)-10-formyltetrahydrofolate + H(+). The protein operates within one-carbon metabolism; tetrahydrofolate interconversion. Its function is as follows. Catalyzes the oxidation of 5,10-methylenetetrahydrofolate to 5,10-methenyltetrahydrofolate and then the hydrolysis of 5,10-methenyltetrahydrofolate to 10-formyltetrahydrofolate. This Marinobacter nauticus (strain ATCC 700491 / DSM 11845 / VT8) (Marinobacter aquaeolei) protein is Bifunctional protein FolD.